We begin with the raw amino-acid sequence, 277 residues long: Pristinamycin IIA synthase subunit B (277 aa).

Heterodimer of two subunits, SnaA and SnaB. Requires FMN as cofactor.

In terms of biological role, catalyzes the oxidation of the proline residue of pristinamycin IIB (PIIB) to pristinamycin IIA (PIIA). This is Pristinamycin IIA synthase subunit B (snaB) from Streptomyces pristinaespiralis.